Here is a 132-residue protein sequence, read N- to C-terminus: Interleukin-13 (132 aa).

The N-terminal stretch at 1 to 18 is a signal peptide; the sequence is MALLLTTVIALTCLGGFA. Residues Asn-38, Asn-49, Asn-57, and Asn-72 are each glycosylated (N-linked (GlcNAc...) asparagine). 2 cysteine pairs are disulfide-bonded: Cys-48–Cys-76 and Cys-64–Cys-90.

It belongs to the IL-4/IL-13 family. In terms of assembly, interacts with IL13RA2.

The protein resides in the secreted. Cytokine that plays important roles in allergic inflammation and immune response to parasite infection. Synergizes with IL2 in regulating interferon-gamma synthesis. Stimulates B-cell proliferation, and activation of eosinophils, basophils, and mast cells. Plays an important role in controlling IL33 activity by modulating the production of transmembrane and soluble forms of interleukin-1 receptor-like 1/IL1RL1. Displays the capacity to antagonize Th1-driven proinflammatory immune response and downregulates synthesis of many proinflammatory cytokines including IL1, IL6, IL10, IL12 and TNF-alpha through a mechanism that partially involves suppression of NF-kappa-B. Also functions on nonhematopoietic cells, including endothelial cells where it induces vascular cell adhesion protein 1/VCAM1, which is important in the recruitment of eosinophils. Exerts its biological effects through its receptors which comprises the IL4R chain and the IL13RA1 chain, to activate JAK1 and TYK2, leading to the activation of STAT6. Aside from IL13RA1, another receptor IL13RA2 acts as a high affinity decoy for IL13 and mediates internalization and depletion of extracellular IL13. The protein is Interleukin-13 (IL13) of Macaca mulatta (Rhesus macaque).